The primary structure comprises 133 residues: Fatty acid-binding protein homolog 2 (133 aa).

A fatty acid is bound by residues arginine 107 and arginine 127–tyrosine 129.

Belongs to the calycin superfamily. Fatty-acid binding protein (FABP) family.

May play a role in the acquisition, storage, and transport of lipids, and may be important to the organism since it is incapable of synthesizing most of its lipids de novo. In Echinococcus granulosus (Hydatid tapeworm), this protein is Fatty acid-binding protein homolog 2 (FABP2).